The sequence spans 164 residues: CDP-archaeol synthase (164 aa).

Transmembrane regions (helical) follow at residues 3 to 23 (LTVFFLLIWPPYVANGSAVFA), 55 to 75 (AIGIATGTVLGYFPNLVYHVI), 77 to 97 (VFDAFVLSASAVLGDLIGAFI), and 122 to 142 (FLVYSLFREIPVVYVLAAVVI).

The protein belongs to the CDP-archaeol synthase family. Requires Mg(2+) as cofactor.

Its subcellular location is the cell membrane. It catalyses the reaction 2,3-bis-O-(geranylgeranyl)-sn-glycerol 1-phosphate + CTP + H(+) = CDP-2,3-bis-O-(geranylgeranyl)-sn-glycerol + diphosphate. It participates in membrane lipid metabolism; glycerophospholipid metabolism. Its function is as follows. Catalyzes the formation of CDP-2,3-bis-(O-geranylgeranyl)-sn-glycerol (CDP-archaeol) from 2,3-bis-(O-geranylgeranyl)-sn-glycerol 1-phosphate (DGGGP) and CTP. This reaction is the third ether-bond-formation step in the biosynthesis of archaeal membrane lipids. This is CDP-archaeol synthase from Pyrobaculum aerophilum (strain ATCC 51768 / DSM 7523 / JCM 9630 / CIP 104966 / NBRC 100827 / IM2).